The primary structure comprises 190 residues: uncharacterized protein (190 aa).

This is an uncharacterized protein from Borreliella burgdorferi (strain ATCC 35210 / DSM 4680 / CIP 102532 / B31) (Borrelia burgdorferi).